The primary structure comprises 105 residues: DNA-directed RNA polymerase subunit Rpo13 (105 aa).

2 stretches are compositionally biased toward basic and acidic residues: residues 1–10 (MSEDDSKKEP) and 70–80 (FDDVARSYSKA). 2 disordered regions span residues 1-35 (MSED…GGEF) and 70-105 (FDDV…EEEE). A compositionally biased stretch (basic residues) spans 81–97 (DKKKRRVEKKPKKGKVT).

It belongs to the archaeal Rpo13 RNA polymerase subunit family. Part of the 13-subunit RNA polymerase.

The protein resides in the cytoplasm. It carries out the reaction RNA(n) + a ribonucleoside 5'-triphosphate = RNA(n+1) + diphosphate. In terms of biological role, DNA-dependent RNA polymerase catalyzes the transcription of DNA into RNA using the four ribonucleoside triphosphates as substrates. In vitro binds dsDNA but not ssDNA. This chain is DNA-directed RNA polymerase subunit Rpo13, found in Sulfolobus acidocaldarius (strain ATCC 33909 / DSM 639 / JCM 8929 / NBRC 15157 / NCIMB 11770).